A 360-amino-acid chain; its full sequence is Xanthohumol 4-O-methyltransferase (360 aa).

Residue D227 participates in S-adenosyl-L-methionine binding. The Proton acceptor role is filled by H266.

It belongs to the class I-like SAM-binding methyltransferase superfamily. Cation-independent O-methyltransferase family. In terms of assembly, homodimer. In terms of tissue distribution, highly expressed in lupulin glands. Detected in cones, male flowers and roots.

Its subcellular location is the cytoplasm. It catalyses the reaction xanthohumol + S-adenosyl-L-methionine = 4-O-methylxanthohumol + S-adenosyl-L-homocysteine + H(+). The catalysed reaction is desmethylxanthohumol + S-adenosyl-L-methionine = xanthohumol + S-adenosyl-L-homocysteine + H(+). It carries out the reaction isoliquiritigenin + S-adenosyl-L-methionine = 2'-O-methylisoliquiritigenin + S-adenosyl-L-homocysteine + H(+). The enzyme catalyses trans-resveratrol + S-adenosyl-L-methionine = 3-methoxy-4',5-dihydroxy-trans-stilbene + S-adenosyl-L-homocysteine + H(+). The protein operates within secondary metabolite biosynthesis. With respect to regulation, inhibited by S-adenosyl homocysteine. Its function is as follows. Involved in the biosynthesis of prenylated phenolics natural products which contribute to the bitter taste of beer and display broad biological activities. O-methyltransferase with a low substrate selectivity. Methylates chalconaringenin, desmethylxanthohumol, xanthohumol, isoliquiritigenin, butein, 2',4-dihydroxychalcone, resveratrol, genistein and guaiacol. Catalyzes the biosynthesis of 2',4'-dihydroxy-4,6'-dimethoxy-3'-prenylchalcone (4-O-methylxanthohumol). The polypeptide is Xanthohumol 4-O-methyltransferase (Humulus lupulus (European hop)).